The primary structure comprises 584 residues: MAPLSDFEKQRQENIQRNKDLLRKLNLDSATDSISREIPNQRQANGAKKRKTNNAAKPIKKEPQEPSRRSRRLAGVTMENTEEYQKVKEEMEEAERKKKELEKLKSTRLFGNFHLIDLVTDKRSGDMKFEKKVLKLPNEIKKEENNTKEIKEEEDDHLQDDDINIESDNKVLEILKDLGDKFSAGDFYDLIRNSSSDYDDKGLESKRNEFDNLKLFERFDPLDIKITHQRITAINFHPSKTDRVITAGDKVGNLGIWAVDSTEDEDPAITILKPHGRSIAKILTPHSNPSKIYSCAYDGSVRELDLNKLESSEVIYLKDPYESQDYPLAVSDINLCQEGNPNVLYLTTLGGHFYQHDLRTPFKSIKPNSLLRLHDKKIGSFCINPNLSHQIATASLDRTFRIWDLRNISKSNSSWSEYEDQISPHVYGSYSSRLSVSSVDWNYENRLVCNGYDDTINIFDLSSESSELPPVTEWSKTYQTGTKNKDEQIPTNIKPFTRIKHNCQTGRWVSILKSRWQASPGDGIQKFVIANMNRGLDIYDQKGQILAHLTDSEKVGAVPAVAAMHPIENWCVGGSASGKLYLFE.

A compositionally biased stretch (polar residues) spans 29 to 44 (SATDSISREIPNQRQA). Residues 29-90 (SATDSISREI…TEEYQKVKEE (62 aa)) are disordered. Positions 59–68 (IKKEPQEPSR) are enriched in basic and acidic residues. Residues 76 to 110 (VTMENTEEYQKVKEEMEEAERKKKELEKLKSTRLF) adopt a coiled-coil conformation. WD repeat units follow at residues 226 to 267 (ITHQ…DEDP), 274 to 314 (PHGR…SSEV), 373 to 413 (LHDK…KSNS), 431 to 469 (SSRL…SELP), 506 to 549 (GRWV…LAHL), and 553 to 584 (EKVG…YLFE).

This sequence belongs to the WD repeat DDB2/WDR76 family.

DNA-binding protein that binds to both single- and double-stranded DNA. Binds preferentially to UV-damaged DNA. May be involved in DNA-metabolic processes. This Debaryomyces hansenii (strain ATCC 36239 / CBS 767 / BCRC 21394 / JCM 1990 / NBRC 0083 / IGC 2968) (Yeast) protein is DNA damage-binding protein CMR1.